We begin with the raw amino-acid sequence, 141 residues long: Aspartate 1-decarboxylase (141 aa).

The Schiff-base intermediate with substrate; via pyruvic acid role is filled by S25. Position 25 is a pyruvic acid (Ser) (S25). A substrate-binding site is contributed by T57. The active-site Proton donor is Y58. 73-75 (GAA) contacts substrate.

This sequence belongs to the PanD family. Heterooctamer of four alpha and four beta subunits. The cofactor is pyruvate. In terms of processing, is synthesized initially as an inactive proenzyme, which is activated by self-cleavage at a specific serine bond to produce a beta-subunit with a hydroxyl group at its C-terminus and an alpha-subunit with a pyruvoyl group at its N-terminus.

The protein resides in the cytoplasm. The enzyme catalyses L-aspartate + H(+) = beta-alanine + CO2. It participates in cofactor biosynthesis; (R)-pantothenate biosynthesis; beta-alanine from L-aspartate: step 1/1. Its function is as follows. Catalyzes the pyruvoyl-dependent decarboxylation of aspartate to produce beta-alanine. This chain is Aspartate 1-decarboxylase, found in Salinispora arenicola (strain CNS-205).